The chain runs to 434 residues: UPF0597 protein CLI_2075 (434 aa).

It belongs to the UPF0597 family.

The sequence is that of UPF0597 protein CLI_2075 from Clostridium botulinum (strain Langeland / NCTC 10281 / Type F).